Here is a 366-residue protein sequence, read N- to C-terminus: MGKLIMSIDQRLQLIMRNTAEVITIDELRKKLESDEKLKGYIGFEPSGLFHIGWLIWTQKVKDLVEAGINMTLLRAAWHAWINDKLGGDMNLIKMAADYAVEVIKNYGVDVGKLNIVDADDIVKEKDYWALVIKVAKNASLARIKRALTIMGRRAEEAEIDASKLIYPAMQVSDIFYLDLDIALGGTDQRKAHMLARDVAEKMGKKKIVSIHTPLLVGLQGGQRMNITEGMEEDDIQAEIKMSKSKPESAIFVNDSREDVERKIMGAYCPKGVAENNPILQILKYIIFPRYNFVKIERDIKYGGDVEFKDYEELERTYIEGKIHPMDLKKTTARKLNEILEPIRKSLEKKPEFEEMIQKISKSVTR.

Residues Tyr-41, Tyr-167, Gln-171, Asp-174, and Gln-189 each contribute to the L-tyrosine site. Residues 241–245 (KMSKS) carry the 'KMSKS' region motif. Lys-244 is an ATP binding site.

The protein belongs to the class-I aminoacyl-tRNA synthetase family. TyrS type 4 subfamily. As to quaternary structure, homodimer.

The protein localises to the cytoplasm. The enzyme catalyses tRNA(Tyr) + L-tyrosine + ATP = L-tyrosyl-tRNA(Tyr) + AMP + diphosphate + H(+). Functionally, catalyzes the attachment of tyrosine to tRNA(Tyr) in a two-step reaction: tyrosine is first activated by ATP to form Tyr-AMP and then transferred to the acceptor end of tRNA(Tyr). The polypeptide is Tyrosine--tRNA ligase (Saccharolobus solfataricus (strain ATCC 35092 / DSM 1617 / JCM 11322 / P2) (Sulfolobus solfataricus)).